The sequence spans 362 residues: MERITVTLGERSYPITIAAGLFNEPASFLPLKSGDQVMLVTNETLAPLYLDKVRGVLQRAGVNVDSVILPDGERYKSLTVLDTVFTALLKKPHGRDTTLVALGGGVIGDLTGFAAASYQRGVRFIQVPTTLLSQVDSSVGGKTAVNHPLGKNMIGAFYQPASVVVDLDCLKTLPARELASGLAEVIKYGIILDADFFTWLEGNLDALLRLDGPAMAYCIRRCCELKAEVVAADEREAGLRALLNLGHTFGHAIEAEMGYGNWLHGEAVAAGMVMAACTSERLGQFSSADTQRIIALLRRAGLPVNGPREMSAQAYLPHMLRDKKVLAGELRLVLPLAIGKSEVRGGVSHEVVLSAIADCQQA.

NAD(+) contacts are provided by residues 71-76 (DGERYK), 105-109 (GVIGD), 129-130 (TT), K142, K151, and 169-172 (CLKT). Positions 184, 247, and 264 each coordinate Zn(2+).

Belongs to the sugar phosphate cyclases superfamily. Dehydroquinate synthase family. Co(2+) serves as cofactor. Zn(2+) is required as a cofactor. It depends on NAD(+) as a cofactor.

It is found in the cytoplasm. The enzyme catalyses 7-phospho-2-dehydro-3-deoxy-D-arabino-heptonate = 3-dehydroquinate + phosphate. Its pathway is metabolic intermediate biosynthesis; chorismate biosynthesis; chorismate from D-erythrose 4-phosphate and phosphoenolpyruvate: step 2/7. Its function is as follows. Catalyzes the conversion of 3-deoxy-D-arabino-heptulosonate 7-phosphate (DAHP) to dehydroquinate (DHQ). This is 3-dehydroquinate synthase from Salmonella arizonae (strain ATCC BAA-731 / CDC346-86 / RSK2980).